A 466-amino-acid polypeptide reads, in one-letter code: MAPVSNQVGGHVAVLAFPFSTHAAPLLNIVCRLAAAAPSTLFSFFNTKQSNSSILAGNTSVLRYSNVSVCEVADGVPEGYVFVGKPQEDIELFMKAAPDNFRRCLEASVAESGREVSCLVTDAFFWFGVHMADDMGGVPWVPFWTAGPASLSAHVHTDLIRSTTSGGCHDEKETITVIAGMSKVRPQDLPEGIIFGNLESLFSRMLHQMGQMPPLATAVFINSFEELDPVITNDLKSKFKRFLNVGPLDLLEPPASAATTTPQTAAEAVAGDGCLSWLDEQKVASVVYVSFGSVTRPSPEELMALAEALEASRVPFLWSLRDNLKNRQLDEFLSKGKLNGMVVPWAPQPQVLAHGSVGAFVTHCGWNSVLESVAGGVPLICRPFFGDQKLNARMVEDVWKIGLRLEGGVFTKNGMLKSLDMLLSQDKGTKMKNKINTLKQFAKQAVEPKGSSARNFESLLEMTTTN.

Histidine 22 (proton acceptor) is an active-site residue. An anthocyanidin-binding residues include histidine 22 and glutamine 87. Aspartate 122 functions as the Charge relay in the catalytic mechanism. Threonine 145 lines the UDP-alpha-D-glucose pocket. Residue histidine 154 coordinates an anthocyanidin. Alanine 346, glutamine 348, histidine 363, tryptophan 366, asparagine 367, serine 368, and glutamate 371 together coordinate UDP-alpha-D-glucose. Glycine 386 is a binding site for an anthocyanidin. UDP-alpha-D-glucose is bound by residues aspartate 387 and glutamine 388.

This sequence belongs to the UDP-glycosyltransferase family. As to expression, highest expression detected in receptacles and achenes, with very low levels detected in runners, leaves, flowers, crowns and green receptacles.

It catalyses the reaction an anthocyanidin + UDP-alpha-D-glucose + H(+) = an anthocyanidin 3-O-beta-D-glucoside + UDP. It carries out the reaction cyanidin + UDP-alpha-D-glucose = cyanidin 3-O-beta-D-glucoside + UDP + H(+). The enzyme catalyses pelargonidin + UDP-alpha-D-glucose = pelargonidin 3-O-beta-D-glucoside + UDP. The catalysed reaction is peonidin + UDP-alpha-D-glucose = peonidin 3-O-beta-D-glucoside + UDP. It catalyses the reaction delphinidin + UDP-alpha-D-glucose = delphinidin 3-O-beta-D-glucoside + UDP. It carries out the reaction a flavonol + UDP-alpha-D-glucose = a flavonol 3-O-beta-D-glucoside + UDP + H(+). The protein operates within pigment biosynthesis; anthocyanin biosynthesis. Functionally, in the presence of other necessary color factors, this glycosylation reaction allows the accumulation of anthocyanin pigments. Uses UDP-Glc as a sugar donor, but not UDP-Gal or UDP-GlcUA. Anthocyanidins are the preferred substrates in vivo, but flavonols can also be glucosylated in vitro. In Fragaria ananassa (Strawberry), this protein is Anthocyanidin 3-O-glucosyltransferase 1.